A 114-amino-acid polypeptide reads, in one-letter code: Amphinase-4 (114 aa).

His-15 functions as the Proton acceptor in the catalytic mechanism. Intrachain disulfides connect Cys-26-Cys-79, Cys-41-Cys-85, Cys-59-Cys-100, and Cys-97-Cys-114. Asn-27 carries N-linked (GlcNAc...) asparagine glycosylation. 42–46 (KPVNT) serves as a coordination point for substrate. Residues Asn-67 and Asn-91 are each glycosylated (N-linked (GlcNAc...) asparagine). The active-site Proton donor is His-107.

This sequence belongs to the pancreatic ribonuclease family. As to quaternary structure, monomer. There are at least five different forms arising from glycan heterogeneity.

It localises to the secreted. In terms of biological role, endonuclease, hydrolyzes highly polymerized RNA, poly(U) and poly(C), and the dinucleotides CpA and UpA. Hydrolyzes rCA, rUA and rUG. Has cytotoxic activity against cultured human submaxillary gland carcinoma cells. The chain is Amphinase-4 from Lithobates pipiens (Northern leopard frog).